The primary structure comprises 92 residues: RNA-binding protein Hfq (92 aa).

The Sm domain maps to 9–68 (DPFLNALRRERVPVSIYLVNGIKLQGQVESFDQFVILLKNTVSQMVYKHAISTVVPSRPF).

Belongs to the Hfq family. As to quaternary structure, homohexamer.

Its function is as follows. RNA chaperone that binds small regulatory RNA (sRNAs) and mRNAs to facilitate mRNA translational regulation in response to envelope stress, environmental stress and changes in metabolite concentrations. Also binds with high specificity to tRNAs. This is RNA-binding protein Hfq from Shewanella piezotolerans (strain WP3 / JCM 13877).